An 800-amino-acid polypeptide reads, in one-letter code: Phosphate transporter PHO1 homolog 9 (800 aa).

The region spanning 1-346 (MKFGREFETQ…SRNASKPYLN (346 aa)) is the SPX domain. Over 1-398 (MKFGREFETQ…KTKREKHRIT (398 aa)) the chain is Cytoplasmic. Disordered regions lie at residues 38 to 77 (QKQQ…PGLS), 91 to 119 (NRAS…HNHH), and 212 to 234 (PDLN…PAPS). Positions 42 to 51 (RPPPPPPPPS) are enriched in pro residues. A compositionally biased stretch (gly residues) spans 63–75 (GEGGGGGGGGGPG). Basic residues predominate over residues 95–119 (RSPKKSHKHHNPLSSKRHHHHHNHH). Over residues 216–229 (SVASAPSSPHSTMR) the composition is skewed to polar residues. A helical membrane pass occupies residues 399–419 (YFLGFFSGCAVALAIAITVLV). The Extracellular portion of the chain corresponds to 420–439 (HIRGLTKSEGRHQYMENIFP). The helical transmembrane segment at 440–460 (LYSLFGFVAVHLFMYAADIYF) threads the bilayer. The Cytoplasmic segment spans residues 461–483 (WSRYRVNYPFIFGFEQGNDLGYR). Residues 484–504 (EVLLVGSGLAVLTFGGVISNL) traverse the membrane as a helical segment. The Extracellular segment spans residues 505–520 (DMEMDPRTKSFSVITE). A helical transmembrane segment spans residues 521–541 (LVPLALLVCLMMVLFCPFNII). Over 542–670 (YRSSRYFFVG…IFEMKRGTYW (129 aa)) the chain is Cytoplasmic. An EXS domain is found at 606–800 (YDSEIYKELY…FQELGGSKSV (195 aa)). The helical transmembrane segment at 671 to 691 (LTVAVTTSSIATLFNTYWDIF) threads the bilayer. At 692 to 718 (RDWGLMNRNSKNPWLRDKLLVPYKSIY) the chain is on the extracellular side. A helical membrane pass occupies residues 719–739 (FIVMVANVVLRLAWMQTVLGI). Residues 740-800 (KEAPFLHKRA…FQELGGSKSV (61 aa)) lie on the Cytoplasmic side of the membrane.

Belongs to the SYG1 (TC 2.A.94) family. In terms of tissue distribution, specifically expressed in pollen grains.

It localises to the cell membrane. May transport inorganic phosphate (Pi). The sequence is that of Phosphate transporter PHO1 homolog 9 (PHO1-H9) from Arabidopsis thaliana (Mouse-ear cress).